The following is a 147-amino-acid chain: Hemoglobin subunit gamma (147 aa).

A Globin domain is found at 3-147 (HFTEEDKATI…VASALSSRYH (145 aa)). Heme b contacts are provided by H64 and H93.

It belongs to the globin family. Heterotetramer of two alpha chains and two gamma chains in fetal hemoglobin (Hb F). As to expression, red blood cells.

Functionally, gamma chains make up the fetal hemoglobin F, in combination with alpha chains. This chain is Hemoglobin subunit gamma (HBG), found in Macaca fuscata fuscata (Japanese macaque).